The primary structure comprises 309 residues: Homoserine kinase (309 aa).

91 to 101 contacts ATP; that stretch reads PIGSGLGSSAC.

It belongs to the GHMP kinase family. Homoserine kinase subfamily.

Its subcellular location is the cytoplasm. The catalysed reaction is L-homoserine + ATP = O-phospho-L-homoserine + ADP + H(+). It participates in amino-acid biosynthesis; L-threonine biosynthesis; L-threonine from L-aspartate: step 4/5. Its function is as follows. Catalyzes the ATP-dependent phosphorylation of L-homoserine to L-homoserine phosphate. This Serratia proteamaculans (strain 568) protein is Homoserine kinase.